A 257-amino-acid chain; its full sequence is Zinc import ATP-binding protein ZnuC (257 aa).

Residues 6–221 (IRLDQVGVTF…PAFVELFGKT (216 aa)) enclose the ABC transporter domain. 38 to 45 (GPNGAGKT) is an ATP binding site.

It belongs to the ABC transporter superfamily. Zinc importer (TC 3.A.1.15.5) family. As to quaternary structure, the complex is composed of two ATP-binding proteins (ZnuC), two transmembrane proteins (ZnuB) and a solute-binding protein (ZnuA).

The protein resides in the cell inner membrane. It carries out the reaction Zn(2+)(out) + ATP(in) + H2O(in) = Zn(2+)(in) + ADP(in) + phosphate(in) + H(+)(in). Functionally, part of the ABC transporter complex ZnuABC involved in zinc import. Responsible for energy coupling to the transport system. In Pseudomonas putida (strain ATCC 47054 / DSM 6125 / CFBP 8728 / NCIMB 11950 / KT2440), this protein is Zinc import ATP-binding protein ZnuC.